Here is a 224-residue protein sequence, read N- to C-terminus: ATP-dependent dethiobiotin synthetase BioD (224 aa).

Residue 13–18 (NVGKTI) coordinates ATP. Mg(2+) is bound at residue Thr-17. Lys-38 is a catalytic residue. Ser-42 serves as a coordination point for substrate. Residues Asp-55, 116 to 119 (EGAG), 176 to 177 (NN), and Asn-211 each bind ATP. Residues Asp-55 and Glu-116 each coordinate Mg(2+).

This sequence belongs to the dethiobiotin synthetase family. In terms of assembly, homodimer. Mg(2+) is required as a cofactor.

The protein resides in the cytoplasm. The catalysed reaction is (7R,8S)-7,8-diammoniononanoate + CO2 + ATP = (4R,5S)-dethiobiotin + ADP + phosphate + 3 H(+). The protein operates within cofactor biosynthesis; biotin biosynthesis; biotin from 7,8-diaminononanoate: step 1/2. Catalyzes a mechanistically unusual reaction, the ATP-dependent insertion of CO2 between the N7 and N8 nitrogen atoms of 7,8-diaminopelargonic acid (DAPA, also called 7,8-diammoniononanoate) to form a ureido ring. The polypeptide is ATP-dependent dethiobiotin synthetase BioD (Buchnera aphidicola subsp. Acyrthosiphon pisum (strain 5A)).